Here is a 614-residue protein sequence, read N- to C-terminus: MALLEKLHRRIVDMGLVPRIIALLPVISMLCALFGFISIAILPMDGQYRRTYISENALMPSQAYSYFRESEWNILRGYRSQIKEMVNMTSMERNNLMGSWLQEFGTKTAIYENEQYGETLYGVMHAPRGDGTEAMVLAVPWFNSDDEFNIGGAALGVSLARFFSRWPVWSKNIIVVFSENPRAALRSWVEAYHTSLDLTGGSIEAAVVLDYSSTEDFFEYVEISYDGLNGELPNLDLVNIAISITEHEGMKVSLHGLPSDQLTNNNFWSRLKILCLGIRDWALSGVKKPHGNEAFSGWRIQSVTLKAHGNSGHDITTFGRIPEAMFRSINNLLEKFHQSFFFYLLLAPRQFVSISSYLPSAVALSIAFAISSLNAFINNAYANISLFSEYNLVALLVWFVSLVISFVVSQAFLLIPSSGLLMTISMASCFLPLILSRKIHISEPLSYRLKNVAFLYFSLVSTSLLMINFAMALLIGTLAFPMTFVKTIVESSSEHEVTTQSSNPIKTEPKDEIELVENHMDTTPATPQQQKQKLKNLVLLILTNPFISITLFGLFFDDEFHGFDIINKLVSAWLDLKCWSWFVLCIGWLPCWLLILASSFESKSVVVRSKEKQS.

Over 1–19 the chain is Cytoplasmic; sequence MALLEKLHRRIVDMGLVPR. A helical transmembrane segment spans residues 20–40; that stretch reads IIALLPVISMLCALFGFISIA. At 41–356 the chain is on the lumenal side; the sequence is ILPMDGQYRR…APRQFVSISS (316 aa). N-linked (GlcNAc...) asparagine glycosylation occurs at asparagine 87. Residues 357-377 form a helical membrane-spanning segment; the sequence is YLPSAVALSIAFAISSLNAFI. Residues 378–394 are Cytoplasmic-facing; it reads NNAYANISLFSEYNLVA. Residues 395–415 traverse the membrane as a helical segment; that stretch reads LLVWFVSLVISFVVSQAFLLI. Residues 416 to 464 lie on the Lumenal side of the membrane; that stretch reads PSSGLLMTISMASCFLPLILSRKIHISEPLSYRLKNVAFLYFSLVSTSL. The helical transmembrane segment at 465 to 485 threads the bilayer; the sequence is LMINFAMALLIGTLAFPMTFV. Residues 486–535 lie on the Cytoplasmic side of the membrane; that stretch reads KTIVESSSEHEVTTQSSNPIKTEPKDEIELVENHMDTTPATPQQQKQKLK. The helical transmembrane segment at 536-556 threads the bilayer; sequence NLVLLILTNPFISITLFGLFF. Topologically, residues 557-577 are lumenal; that stretch reads DDEFHGFDIINKLVSAWLDLK. A helical transmembrane segment spans residues 578 to 598; the sequence is CWSWFVLCIGWLPCWLLILAS. The Cytoplasmic portion of the chain corresponds to 599 to 614; it reads SFESKSVVVRSKEKQS. The Prevents secretion from ER motif lies at 610-614; that stretch reads KEKQS.

As to quaternary structure, forms a complex with CDC91, GPI17, GPI16 and GPI8.

It is found in the endoplasmic reticulum membrane. Its pathway is glycolipid biosynthesis; glycosylphosphatidylinositol-anchor biosynthesis. Functionally, component of the GPI transamidase complex. Required for a terminal step of GPI anchor attachment onto proteins. Affects endocytosis. The chain is GPI transamidase component GAA1 (GAA1) from Saccharomyces cerevisiae (strain ATCC 204508 / S288c) (Baker's yeast).